Consider the following 99-residue polypeptide: uncharacterized protein (99 aa).

A helical membrane pass occupies residues 6 to 26 (LVCSIVFILFILFYDLKIGTI). Residues 48–95 (KTVKVKPGDTVMSIVGSAGSPDDIVKDFEALNPNVKANAIQAGTAYKF) form the LysM domain.

The protein localises to the secreted. Its subcellular location is the cell wall. It is found in the membrane. This is an uncharacterized protein from Bacillus subtilis (strain 168).